The following is a 117-amino-acid chain: Galanin peptides (117 aa).

An N-terminal signal peptide occupies residues 1-19 (MQRCAGFLFLSLILCAALS). The propeptide occupies 20 to 30 (ETFGLVLSAKE). Residue Thr-61 is modified to Threonine amide.

This sequence belongs to the galanin family.

It localises to the secreted. Endocrine hormone of the central and peripheral nervous systems that binds and activates the G protein-coupled receptors GALR1, GALR2, and GALR3. This small neuropeptide may regulate diverse physiologic functions including contraction of smooth muscle of the gastrointestinal and genitourinary tract, growth hormone and insulin release and adrenal secretion. The polypeptide is Galanin peptides (GAL) (Coturnix japonica (Japanese quail)).